The chain runs to 475 residues: Probable L-cysteine desulfhydrase, chloroplastic (475 aa).

Residues 1 to 24 constitute a chloroplast transit peptide; sequence MASSLSPPEEASYHHRHTKRYTSS. The segment at 1–40 is disordered; that stretch reads MASSLSPPEEASYHHRHTKRYTSSASSASSTTNGTVESSV. Residues 22–32 are compositionally biased toward low complexity; it reads TSSASSASSTT. At lysine 284 the chain carries N6-(pyridoxal phosphate)lysine.

This sequence belongs to the class-V pyridoxal-phosphate-dependent aminotransferase family. As to quaternary structure, interacts in vitro with QS.

Its subcellular location is the plastid. It localises to the chloroplast. Its function is as follows. May catalyze the production of hydrogen sulfide (H2S) from cysteine. In Arabidopsis thaliana (Mouse-ear cress), this protein is Probable L-cysteine desulfhydrase, chloroplastic.